A 737-amino-acid chain; its full sequence is Cilium assembly protein DZIP1L (737 aa).

The interval 1–293 (MGFKGKYPQM…LKQSNEQFIQ (293 aa)) is interaction with Rab8. The stretch at 98-132 (VTDLKEAHTTAQEEIATLRKSLSESNNEVVQLHKR) forms a coiled coil. The segment at 144-167 (YPCHLCTKNFISNEALNVHIGRKH) adopts a C2H2-type zinc-finger fold. Disordered stretches follow at residues 167 to 187 (HRVA…DRDK), 214 to 267 (ERNI…KEQL), 415 to 548 (SEFL…RKDA), 624 to 682 (KSPL…VSRD), and 698 to 737 (IRGA…DNLK). Basic and acidic residues-rich tracts occupy residues 244 to 266 (EPKE…RKEQ) and 415 to 438 (SEFL…KGSE). Positions 457–469 (SAGSSDSNPTYTK) are enriched in polar residues. Over residues 492–510 (SQEETENEEERSLTEEEGT) the composition is skewed to acidic residues. Positions 665-677 (SSEQQTRSPSPQR) are enriched in polar residues. The span at 724 to 737 (EDGKSFNDSDDNLK) shows a compositional bias: basic and acidic residues.

The protein belongs to the DZIP C2H2-type zinc-finger protein family. As to quaternary structure, component of a ciliary transition zone (TZ)-localized complex composed of DZIP1, Fam92 and Cby. Interacts directly with Cby. Interacts with Cep290 (via N-terminus). Interacts (via N-terminus) with Rab8. In neurons of the second and third antennal segments, expressed at the tip of the dendrites.

It is found in the cytoplasm. Its subcellular location is the cytoskeleton. The protein localises to the microtubule organizing center. It localises to the centrosome. The protein resides in the centriole. It is found in the cilium basal body. Component of the DZIP1-Fam92-Cby complex which promotes ciliogenesis in sensory neurons and spermatocytes by acting downstream of Cep290 to initiate early ciliary membrane formation and thus transition zone (TZ) assembly. During spermatogenesis, also regulates distal elongation of the basal-body and their docking (anchoring) to the plasma membrane and as a consequence, regulates the initiation and proper elongation of axonemal microtubules. Within the complex, required to recruit or stabilize Rab8, Fam92 and Cby at the distal basal body of cilia to promote early ciliary membrane formation and initiate TZ assembly. Also acts with Fam92 to restrict Cep290 localization to the proximal part of the TZ. May also be involved in recruitment or stabilization of Mks1 at the TZ. This chain is Cilium assembly protein DZIP1L, found in Drosophila melanogaster (Fruit fly).